A 293-amino-acid polypeptide reads, in one-letter code: Shikimate kinase (293 aa).

87–97 (PLAGGLKSSSA) is a binding site for ATP.

It belongs to the GHMP kinase family. Archaeal shikimate kinase subfamily.

The protein resides in the cytoplasm. It carries out the reaction shikimate + ATP = 3-phosphoshikimate + ADP + H(+). It participates in metabolic intermediate biosynthesis; chorismate biosynthesis; chorismate from D-erythrose 4-phosphate and phosphoenolpyruvate: step 5/7. The chain is Shikimate kinase from Methanosarcina mazei (strain ATCC BAA-159 / DSM 3647 / Goe1 / Go1 / JCM 11833 / OCM 88) (Methanosarcina frisia).